A 44-amino-acid polypeptide reads, in one-letter code: MTKGNANQPVSYPIFTFRWLAIHGLAIPTVFFLGAITSMQFIQR.

The chain crosses the membrane as a helical span at residues 19-35 (WLAIHGLAIPTVFFLGA). Residue His-23 participates in heme binding.

Belongs to the PsbE/PsbF family. In terms of assembly, heterodimer of an alpha subunit and a beta subunit. PSII is composed of 1 copy each of membrane proteins PsbA, PsbB, PsbC, PsbD, PsbE, PsbF, PsbH, PsbI, PsbJ, PsbK, PsbL, PsbM, PsbT, PsbX, PsbY, PsbZ, Psb30/Ycf12, at least 3 peripheral proteins of the oxygen-evolving complex and a large number of cofactors. It forms dimeric complexes. Heme b serves as cofactor.

The protein resides in the plastid. It localises to the chloroplast thylakoid membrane. In terms of biological role, this b-type cytochrome is tightly associated with the reaction center of photosystem II (PSII). PSII is a light-driven water:plastoquinone oxidoreductase that uses light energy to abstract electrons from H(2)O, generating O(2) and a proton gradient subsequently used for ATP formation. It consists of a core antenna complex that captures photons, and an electron transfer chain that converts photonic excitation into a charge separation. The protein is Cytochrome b559 subunit beta of Porphyra purpurea (Red seaweed).